The primary structure comprises 429 residues: Tubby-like F-box protein 5 (429 aa).

In terms of domain architecture, F-box spans 53 to 108 (TRWANLPAALLRDVMKKLDESESTWPARKQVVACAGVCKTWRLMCKDIVKSPEFSG). Positions 360 to 385 (QPGSGSDGGALATRPSLSPQQPEQSN) are disordered. Residues 374–383 (PSLSPQQPEQ) are compositionally biased toward polar residues.

It belongs to the TUB family. In terms of tissue distribution, mostly expressed in roots, flowers and siliques.

The protein is Tubby-like F-box protein 5 of Arabidopsis thaliana (Mouse-ear cress).